A 284-amino-acid chain; its full sequence is GPN-loop GTPase 3 (284 aa).

13 to 18 (GSGKST) contributes to the GTP binding site. The short motif at 72–74 (GPN) is the Gly-Pro-Asn (GPN)-loop; involved in dimer interface element. 174 to 177 (TKMD) is a binding site for GTP. The segment at 261 to 284 (KEPKEHEEESSSMFDEYFQERQNE) is disordered.

The protein belongs to the GPN-loop GTPase family. As to quaternary structure, heterodimer with GPN1. Binds to RNA polymerase II (RNAPII). Interacts directly with subunits RPB4 and RPB7 and the CTD of RPB1.

Its function is as follows. Small GTPase required for proper localization of RNA polymerase II (RNAPII). May act at an RNAP assembly step prior to nuclear import. The polypeptide is GPN-loop GTPase 3 (Rattus norvegicus (Rat)).